The sequence spans 505 residues: Probable bifunctional methylthioribulose-1-phosphate dehydratase/enolase-phosphatase E1 (505 aa).

The segment at 1–237 (MGLDKDGISN…ALKLHQLGLD (237 aa)) is methylthioribulose-1-phosphate dehydratase. Cys109 is a binding site for substrate. Zn(2+)-binding residues include His127 and His129. Glu152 serves as the catalytic Proton donor/acceptor; for methylthioribulose-1-phosphate dehydratase activity. Residue His202 coordinates Zn(2+). The enolase-phosphatase E1 stretch occupies residues 266 to 505 (FVLDIEGTTT…FRTAKSLLEL (240 aa)). Residues Asp269 and Glu271 each coordinate Mg(2+). Residues 404–405 (SS) and Lys438 each bind substrate. Asp464 lines the Mg(2+) pocket.

The protein in the N-terminal section; belongs to the aldolase class II family. MtnB subfamily. In the C-terminal section; belongs to the HAD-like hydrolase superfamily. MasA/MtnC family. The cofactor is Zn(2+). Mg(2+) serves as cofactor.

It carries out the reaction 5-(methylsulfanyl)-D-ribulose 1-phosphate = 5-methylsulfanyl-2,3-dioxopentyl phosphate + H2O. It catalyses the reaction 5-methylsulfanyl-2,3-dioxopentyl phosphate + H2O = 1,2-dihydroxy-5-(methylsulfanyl)pent-1-en-3-one + phosphate. It participates in amino-acid biosynthesis; L-methionine biosynthesis via salvage pathway; L-methionine from S-methyl-5-thio-alpha-D-ribose 1-phosphate: step 2/6. The protein operates within amino-acid biosynthesis; L-methionine biosynthesis via salvage pathway; L-methionine from S-methyl-5-thio-alpha-D-ribose 1-phosphate: step 3/6. It functions in the pathway amino-acid biosynthesis; L-methionine biosynthesis via salvage pathway; L-methionine from S-methyl-5-thio-alpha-D-ribose 1-phosphate: step 4/6. The protein is Probable bifunctional methylthioribulose-1-phosphate dehydratase/enolase-phosphatase E1 of Physcomitrium patens (Spreading-leaved earth moss).